Here is a 353-residue protein sequence, read N- to C-terminus: Paraxanthine methyltransferase 2 (353 aa).

Tyr18 is an S-adenosyl-L-methionine binding site. Substrate contacts are provided by residues Tyr18 and Gln21–Gln25. S-adenosyl-L-methionine-binding positions include Gly59, Gly59–Cys60, Asn65, Phe99–Leu102, Ser128–Phe130, and Ser145–Ala147. Position 146–150 (Tyr146–Phe150) interacts with substrate. Residues Asn167, Asp252, and Phe254 each contribute to the Mg(2+) site. The substrate site is built by Ser301 and Tyr306.

It belongs to the methyltransferase superfamily. SABATH family. Homodimer. Mg(2+) serves as cofactor.

The sequence is that of Paraxanthine methyltransferase 2 from Arabidopsis thaliana (Mouse-ear cress).